We begin with the raw amino-acid sequence, 257 residues long: Adenosylcobinamide-GDP ribazoletransferase (257 aa).

4 consecutive transmembrane segments (helical) span residues 28–48, 50–70, 110–130, and 199–219; these read FARS…LVAL, LFVP…VYAV, VALA…VEVA, and WPQV…AALV.

The protein belongs to the CobS family. It depends on Mg(2+) as a cofactor.

It localises to the cell membrane. It carries out the reaction alpha-ribazole + adenosylcob(III)inamide-GDP = adenosylcob(III)alamin + GMP + H(+). It catalyses the reaction alpha-ribazole 5'-phosphate + adenosylcob(III)inamide-GDP = adenosylcob(III)alamin 5'-phosphate + GMP + H(+). The protein operates within cofactor biosynthesis; adenosylcobalamin biosynthesis; adenosylcobalamin from cob(II)yrinate a,c-diamide: step 7/7. Its function is as follows. Joins adenosylcobinamide-GDP and alpha-ribazole to generate adenosylcobalamin (Ado-cobalamin). Also synthesizes adenosylcobalamin 5'-phosphate from adenosylcobinamide-GDP and alpha-ribazole 5'-phosphate. This chain is Adenosylcobinamide-GDP ribazoletransferase, found in Halorubrum lacusprofundi (strain ATCC 49239 / DSM 5036 / JCM 8891 / ACAM 34).